Consider the following 534-residue polypeptide: Putative ammonium transporter 1 (534 aa).

Transmembrane regions (helical) follow at residues 31–51 (SFFL…FAYL), 69–89 (LLDS…LAYG), 115–135 (FFFQ…AVAE), 139–159 (FITY…VLTH), 184–204 (FAGS…AAWI), 223–243 (ILGH…FGFL), 263–283 (ALAM…YLGV), 291–311 (WTLL…CAGC), 318–338 (ACIW…KLMI), 346–366 (LDAF…SSII), and 401–421 (ICAL…FWIL).

This sequence belongs to the ammonia transporter channel (TC 1.A.11.2) family.

It is found in the membrane. Its function is as follows. Involved in the uptake of ammonia. The sequence is that of Putative ammonium transporter 1 (amt-1) from Caenorhabditis elegans.